Consider the following 178-residue polypeptide: Fucolectin-1 (178 aa).

Positions 1-20 are cleaved as a signal peptide; that stretch reads MKVKTIMLLFQILAISTIKS. The interval 29–178 is F5/8 type C-like; sequence QENVAVRGKA…VEVNALLPVN (150 aa). Ca(2+)-binding residues include Asp-59, Asn-61, and Ser-70. Cystine bridges form between Cys-71-Cys-167, Cys-103-Cys-104, and Cys-129-Cys-145. His-73 and Arg-100 together coordinate alpha-L-fucose. Positions 100–102 match the Cell attachment site motif; the sequence is RGD. Arg-107 provides a ligand contact to alpha-L-fucose. 2 residues coordinate Ca(2+): Cys-167 and Glu-168.

This sequence belongs to the fucolectin family. In terms of assembly, homotrimer. Parenchymal hepatocytes.

The protein localises to the secreted. Its subcellular location is the extracellular space. Functionally, acts as a defensive agent. Recognizes blood group fucosylated oligosaccharides including A, B, H and Lewis B-type antigens. Does not recognize Lewis A antigen and has low affinity for monovalent haptens. The chain is Fucolectin-1 from Anguilla japonica (Japanese eel).